A 123-amino-acid chain; its full sequence is Chondroitin proteoglycan 8 (123 aa).

Residues 1 to 16 (MRPFILLALLFSVAIA) form the signal peptide. A disordered region spans residues 32 to 123 (SVRRSTRGAD…SGSGDEAPAE (92 aa)). Residues 38 to 60 (RGADKKADSSDSSDSNEKDDKVT) are compositionally biased toward basic and acidic residues. O-linked (Xyl...) (chondroitin sulfate) serine glycosylation is found at serine 63 and serine 65. Residues 74–84 (EQLRRVARDVE) are compositionally biased toward basic and acidic residues. O-linked (Xyl...) (chondroitin sulfate) serine glycans are attached at residues serine 87, serine 93, and serine 114.

The protein is Chondroitin proteoglycan 8 (cpg-8) of Caenorhabditis briggsae.